Here is a 413-residue protein sequence, read N- to C-terminus: Ras association domain-containing protein 5 (413 aa).

Positions 1-105 are disordered; that stretch reads MASPAIGQRP…RDVRSIFEQP (105 aa). Over residues 61–74 the composition is skewed to basic and acidic residues; it reads ARGDPEPTPRDCRH. The segment at 117–165 adopts a Phorbol-ester/DAG-type zinc-finger fold; sequence GHRFAELALRGGPGWCDLCGREVLRQALRCANCKFTCHPECRSLIQLDC. Residues serine 177 and serine 274 each carry the phosphoserine modification. The Ras-associating domain maps to 265–359; that stretch reads PAATTDKRTS…LSFVLKENET (95 aa). Threonine 347 carries the phosphothreonine modification. One can recognise an SARAH domain in the interval 361 to 408; the sequence is DVEWDAFSIPELQNFLTILEKEEQDKIHQLQKKYNKFRQKLEEALRES.

As to quaternary structure, interacts directly with activated HRAS; a RASSF5-STK4/MST1 complex probably associates with activated HRAS. Interacts with KRAS. Probably interacts with Ras-like GTPases RRAS, MRAS, RAP1B, RAP2A and RALA. Interacts with RRAS2. Can self-associate. Interacts with RSSF1 isoform A. The RSSF1 isoform A-RSSF5 heterodimer probably mediates the association of RSSF1 with HRAS. Isoform 2 interacts with activated RAP1A and ITGAL/LFA-1. Binds STK4/MST1, inhibiting STK4/MST1 autoactivation.

It localises to the cytoplasm. The protein localises to the cytoskeleton. Potential tumor suppressor. Seems to be involved in lymphocyte adhesion by linking RAP1A activation upon T-cell receptor or chemokine stimulation to integrin activation. Stimulates lymphocyte polarization and the patch-like distribution of ITGAL/LFA-1, resulting in an enhanced adhesion to ICAM1. Together with RAP1A may participate in regulation of microtubule growth. The association with activated RAP1A is required for directional movement of endothelial cells during wound healing. May be involved in regulation of Ras apoptotic function. The RASSF5-STK4/MST1 complex may mediate HRAS and KRAS induced apoptosis. The chain is Ras association domain-containing protein 5 (Rassf5) from Rattus norvegicus (Rat).